The primary structure comprises 150 residues: Urease accessory protein UreE (150 aa).

It belongs to the UreE family.

The protein resides in the cytoplasm. Functionally, involved in urease metallocenter assembly. Binds nickel. Probably functions as a nickel donor during metallocenter assembly. The protein is Urease accessory protein UreE of Streptococcus vestibularis.